Here is a 2377-residue protein sequence, read N- to C-terminus: DNA (cytosine-5-)-methyltransferase DMT5 (2377 aa).

Residues 24 to 56 (GTADGAVNGGNIPNSQSQKRKRASPSPEIESEE) are disordered. A Chromo; shadow subtype domain is found at 62-126 (YEIDYIADSR…KNPGKPRLSP (65 aa)). The interval 150–282 (GKSRAASSTD…KSSLPKAKLR (133 aa)) is disordered. The span at 201 to 213 (PTSKKVHPNKKCK) shows a compositional bias: basic residues. Composition is skewed to acidic residues over residues 217 to 238 (DDES…DDND) and 245 to 263 (EDDE…ESDE). The segment covering 268–282 (PAKKTKSSLPKAKLR) has biased composition (basic residues). The region spanning 347-753 (LRVATMCSGT…IAALKVACHK (407 aa)) is the SAM-dependent MTase C5-type domain. Cysteine 440 is an active-site residue. Positions 1450–1771 (AERPVMVRGG…RSIATFMGIH (322 aa)) constitute a Helicase ATP-binding domain. 1463–1470 (DQVGYGKT) lines the ATP pocket. Disordered regions lie at residues 1642–1680 (KGQA…ENSK), 2313–2334 (KGRG…TVKS), and 2347–2377 (SSFR…SDII). A compositionally biased stretch (basic and acidic residues) spans 1645-1669 (AYRDKHDSDSKAKPITKEELERWEA). The region spanning 2152 to 2315 (KLEHLVNLIH…EIPQEEYKGR (164 aa)) is the Helicase C-terminal domain. The span at 2317-2334 (SSISMTNEKRTPTLTVKS) shows a compositional bias: polar residues. The span at 2363-2377 (GVSDDDENSELSDII) shows a compositional bias: acidic residues.

This sequence in the N-terminal section; belongs to the class I-like SAM-binding methyltransferase superfamily. C5-methyltransferase family. In the C-terminal section; belongs to the SNF2/RAD54 helicase family. In terms of assembly, interacts with SWI6. Requires Mg(2+) as cofactor.

Its subcellular location is the nucleus. It localises to the chromosome. It carries out the reaction a 2'-deoxycytidine in DNA + S-adenosyl-L-methionine + ATP + H2O = a 5-methyl-2'-deoxycytidine in DNA + S-adenosyl-L-homocysteine + ADP + phosphate + 2 H(+). Hemimethylated DNA substrates stimulate ATP hydrolysis and this is a prerequisite for methyltransferase activity. Its function is as follows. ATP-dependent cytosine methylase that maintains DNA methylation by acting at hemimethylated palindromic 5'-CG-3' sites to produce symmetrically methylated DNA strands. DNA methylation may play a role in transcriptional silencing, particularly at transposable elements. This Cryptococcus neoformans var. grubii serotype A (strain H99 / ATCC 208821 / CBS 10515 / FGSC 9487) (Filobasidiella neoformans var. grubii) protein is DNA (cytosine-5-)-methyltransferase DMT5.